A 345-amino-acid chain; its full sequence is Protein RecA (345 aa).

G81–T88 lines the ATP pocket.

The protein belongs to the RecA family.

Its subcellular location is the cytoplasm. In terms of biological role, can catalyze the hydrolysis of ATP in the presence of single-stranded DNA, the ATP-dependent uptake of single-stranded DNA by duplex DNA, and the ATP-dependent hybridization of homologous single-stranded DNAs. It interacts with LexA causing its activation and leading to its autocatalytic cleavage. The polypeptide is Protein RecA (Mycoplasma mycoides).